Reading from the N-terminus, the 788-residue chain is Cell division cycle protein 27 homolog (788 aa).

The interval 198 to 436 (YLDSPASSLK…PLPSVASSLN (239 aa)) is disordered. Residues 217-229 (GPSSSSAASTAEP) show a composition bias toward low complexity. 3 stretches are compositionally biased toward polar residues: residues 241 to 273 (RGTIASANRETRNTTSNITPRQSTPGSTPSRIN), 293 to 303 (SSVTGSRSSLF), and 319 to 360 (NRAN…NPVR). Positions 366–378 (ADAAAAANKTAKT) are enriched in low complexity. The segment covering 391-414 (VSRNSNLARSLSGSTNSVASTASE) has biased composition (polar residues). 5 TPR repeats span residues 561-594 (PQSWCAAGNCFSLQRQHTQAIECMERAIQLDKRF), 596-628 (YAYTLLGHELIVQDELDKAAGSFRSALLLSPRD), 629-662 (YRAWYGLGLVHLKKEQNLTALTNIQKAVNINPTN), 664-696 (AMLCTLSQIEQQRGQIDTALVLIDRALTLNPLD), and 731-764 (AFIFHLLARVHRRMGNTHLALLNYSWAAELDPRG).

This sequence belongs to the APC3/CDC27 family. The APC/C complex is probably composed of at least 12 subunits: apc-2, apc-10, apc-11, cdc-26, emb-1, emb-27, emb-30, mat-1, mat-2, mat-3, such-1 and gfi-3. Expressed in the ventral nerve cord.

It localises to the nucleus. It participates in protein modification; protein ubiquitination. Probable component of the anaphase promoting complex/cyclosome (APC/C), a cell cycle-regulated E3 ubiquitin ligase that controls progression through mitosis and the G1 phase of the cell cycle. The APC/C complex acts by mediating ubiquitination and subsequent degradation of target proteins. Developmental role in early embryogenesis and the metaphase to anaphase transition in oocyte and spermatocyte meiosis and mitosis in germ cells. Required for embryonic anterior-posterior axis formation. Plays a role in regulating the abundance of glr-1 receptors in postmitotic neurons, which may in turn control animal locomotion. This chain is Cell division cycle protein 27 homolog, found in Caenorhabditis elegans.